The chain runs to 263 residues: Acyl-[acyl-carrier-protein]--UDP-N-acetylglucosamine O-acyltransferase (263 aa).

Belongs to the transferase hexapeptide repeat family. LpxA subfamily. Homotrimer.

The protein localises to the cytoplasm. The enzyme catalyses a (3R)-hydroxyacyl-[ACP] + UDP-N-acetyl-alpha-D-glucosamine = a UDP-3-O-[(3R)-3-hydroxyacyl]-N-acetyl-alpha-D-glucosamine + holo-[ACP]. It functions in the pathway glycolipid biosynthesis; lipid IV(A) biosynthesis; lipid IV(A) from (3R)-3-hydroxytetradecanoyl-[acyl-carrier-protein] and UDP-N-acetyl-alpha-D-glucosamine: step 1/6. Its function is as follows. Involved in the biosynthesis of lipid A, a phosphorylated glycolipid that anchors the lipopolysaccharide to the outer membrane of the cell. The polypeptide is Acyl-[acyl-carrier-protein]--UDP-N-acetylglucosamine O-acyltransferase (Campylobacter jejuni subsp. doylei (strain ATCC BAA-1458 / RM4099 / 269.97)).